Reading from the N-terminus, the 232-residue chain is Uracil phosphoribosyltransferase (232 aa).

38–42 contacts GTP; it reads KGLVR. 5-phospho-alpha-D-ribose 1-diphosphate is bound by residues R87, R112, and 140–148; that span reads DPMIATGST. Residues I204 and 209 to 211 each bind uracil; that span reads GDA. D210 contributes to the 5-phospho-alpha-D-ribose 1-diphosphate binding site.

Belongs to the UPRTase family. It depends on Mg(2+) as a cofactor.

The catalysed reaction is UMP + diphosphate = 5-phospho-alpha-D-ribose 1-diphosphate + uracil. The protein operates within pyrimidine metabolism; UMP biosynthesis via salvage pathway; UMP from uracil: step 1/1. Allosterically activated by GTP. Functionally, catalyzes the conversion of uracil and 5-phospho-alpha-D-ribose 1-diphosphate (PRPP) to UMP and diphosphate. This Methanococcus vannielii (strain ATCC 35089 / DSM 1224 / JCM 13029 / OCM 148 / SB) protein is Uracil phosphoribosyltransferase.